We begin with the raw amino-acid sequence, 73 residues long: Putative antitoxin VapB18 (73 aa).

It belongs to the UPF0330 family.

In terms of biological role, possibly the antitoxin component of a type II toxin-antitoxin (TA) system. Its cognate toxin is VapC18 (Potential). The sequence is that of Putative antitoxin VapB18 (vapB18) from Archaeoglobus fulgidus (strain ATCC 49558 / DSM 4304 / JCM 9628 / NBRC 100126 / VC-16).